We begin with the raw amino-acid sequence, 508 residues long: Photosystem II CP47 reaction center protein (508 aa).

A run of 6 helical transmembrane segments spans residues Ser-21–Ser-36, Ile-101–Trp-115, Gly-140–Phe-156, Ile-203–Leu-218, Val-237–Val-252, and Ser-457–Arg-472.

It belongs to the PsbB/PsbC family. PsbB subfamily. PSII is composed of 1 copy each of membrane proteins PsbA, PsbB, PsbC, PsbD, PsbE, PsbF, PsbH, PsbI, PsbJ, PsbK, PsbL, PsbM, PsbT, PsbY, PsbZ, Psb30/Ycf12, at least 3 peripheral proteins of the oxygen-evolving complex and a large number of cofactors. It forms dimeric complexes. Binds multiple chlorophylls. PSII binds additional chlorophylls, carotenoids and specific lipids. is required as a cofactor.

It localises to the plastid. The protein resides in the chloroplast thylakoid membrane. Its function is as follows. One of the components of the core complex of photosystem II (PSII). It binds chlorophyll and helps catalyze the primary light-induced photochemical processes of PSII. PSII is a light-driven water:plastoquinone oxidoreductase, using light energy to abstract electrons from H(2)O, generating O(2) and a proton gradient subsequently used for ATP formation. The protein is Photosystem II CP47 reaction center protein of Euglena gracilis.